A 468-amino-acid chain; its full sequence is ATP synthase subunit beta (468 aa).

148-155 (GGAGVGKT) is a binding site for ATP.

This sequence belongs to the ATPase alpha/beta chains family. F-type ATPases have 2 components, CF(1) - the catalytic core - and CF(0) - the membrane proton channel. CF(1) has five subunits: alpha(3), beta(3), gamma(1), delta(1), epsilon(1). CF(0) has three main subunits: a(1), b(2) and c(9-12). The alpha and beta chains form an alternating ring which encloses part of the gamma chain. CF(1) is attached to CF(0) by a central stalk formed by the gamma and epsilon chains, while a peripheral stalk is formed by the delta and b chains.

The protein resides in the cell inner membrane. It carries out the reaction ATP + H2O + 4 H(+)(in) = ADP + phosphate + 5 H(+)(out). Produces ATP from ADP in the presence of a proton gradient across the membrane. The catalytic sites are hosted primarily by the beta subunits. The protein is ATP synthase subunit beta of Xanthomonas oryzae pv. oryzae (strain KACC10331 / KXO85).